The chain runs to 213 residues: MAVLRVLCGLLLVSILFLGFVLSEGNGPKVTEKVFFDIEVDEQPLGRIIIGLFGKTVPKTVENFKQLSIGTTLKDGRTAAYKGSTFHRVIKSFMIQGGDFTNHDGTGGFSIYGERFPDENFKLKHVGAGWLSMANAGPNTNGAQFFITTTQNPWLDGKHVVFGKVVEGMSVVRQIENMQTDSRDRPVKSVKIANCGHIPVDVPFSVSNTDAAE.

The signal sequence occupies residues 1 to 23 (MAVLRVLCGLLLVSILFLGFVLS). A PPIase cyclophilin-type domain is found at 35–197 (FFDIEVDEQP…KSVKIANCGH (163 aa)). The Prevents secretion from ER motif lies at 210-213 (DAAE).

This sequence belongs to the cyclophilin-type PPIase family. PPIase B subfamily.

Its subcellular location is the endoplasmic reticulum lumen. It carries out the reaction [protein]-peptidylproline (omega=180) = [protein]-peptidylproline (omega=0). With respect to regulation, inhibited by cyclosporin A (CsA). In terms of biological role, PPIases accelerate the folding of proteins. It catalyzes the cis-trans isomerization of proline imidic peptide bonds in oligopeptides. The sequence is that of Peptidyl-prolyl cis-trans isomerase B from Schistosoma japonicum (Blood fluke).